The sequence spans 493 residues: Glycerol kinase (493 aa).

Thr-13 contacts ADP. Residues Thr-13, Thr-14, and Ser-15 each coordinate ATP. Thr-13 lines the sn-glycerol 3-phosphate pocket. Arg-17 is an ADP binding site. Positions 83, 84, 135, and 244 each coordinate sn-glycerol 3-phosphate. Arg-83, Glu-84, Tyr-135, Asp-244, and Gln-245 together coordinate glycerol. ADP is bound by residues Thr-266 and Gly-309. Thr-266, Gly-309, Gln-313, and Gly-410 together coordinate ATP. Gly-410 and Asn-414 together coordinate ADP.

It belongs to the FGGY kinase family.

The enzyme catalyses glycerol + ATP = sn-glycerol 3-phosphate + ADP + H(+). It functions in the pathway polyol metabolism; glycerol degradation via glycerol kinase pathway; sn-glycerol 3-phosphate from glycerol: step 1/1. With respect to regulation, inhibited by fructose 1,6-bisphosphate (FBP). Functionally, key enzyme in the regulation of glycerol uptake and metabolism. Catalyzes the phosphorylation of glycerol to yield sn-glycerol 3-phosphate. In Shewanella halifaxensis (strain HAW-EB4), this protein is Glycerol kinase.